The sequence spans 207 residues: Probable GTP-binding protein EngB (207 aa).

The EngB-type G domain occupies 24–199; that stretch reads GGYEVAFAGR…RAIVGAWLGL (176 aa). Residues 32–39, 59–63, 77–80, 144–147, and 178–180 each bind GTP; these read GRSNAGKS, GRTQQ, DLPG, TKAD, and YSG. 2 residues coordinate Mg(2+): Ser-39 and Thr-61.

Belongs to the TRAFAC class TrmE-Era-EngA-EngB-Septin-like GTPase superfamily. EngB GTPase family. The cofactor is Mg(2+).

Functionally, necessary for normal cell division and for the maintenance of normal septation. The polypeptide is Probable GTP-binding protein EngB (Xanthomonas euvesicatoria pv. vesicatoria (strain 85-10) (Xanthomonas campestris pv. vesicatoria)).